Reading from the N-terminus, the 211-residue chain is Heat shock 70 kDa protein 4L (211 aa).

Residue Ser161 is modified to Phosphoserine.

It belongs to the heat shock protein 70 family. In terms of assembly, homodimer.

It is found in the cytoplasm. The protein resides in the nucleus. Possesses chaperone activity in vitro where it inhibits aggregation of citrate synthase. This Mesocricetus auratus (Golden hamster) protein is Heat shock 70 kDa protein 4L.